A 644-amino-acid chain; its full sequence is ATP-dependent zinc metalloprotease FtsH (644 aa).

The Cytoplasmic portion of the chain corresponds to 1–4 (MAKN). A helical transmembrane segment spans residues 5–25 (LILWLVIAVVLMSVFQSFGPS). Topologically, residues 26–98 (ESNGRKVDYS…VGEPPEEPSL (73 aa)) are periplasmic. A helical membrane pass occupies residues 99-119 (LASIFISWFPMLLLIGVWIFF). The Cytoplasmic portion of the chain corresponds to 120–644 (MRQMQGGGGK…NTMSEQLGDK (525 aa)). Residue 192–199 (GPPGTGKT) coordinates ATP. H414 contacts Zn(2+). E415 is an active-site residue. Residues H418 and D492 each contribute to the Zn(2+) site. The disordered stretch occupies residues 599–644 (RPPAGWEDPNGTNNSDSNGTPQAPRPVDEPRTPNPGNTMSEQLGDK). 2 stretches are compositionally biased toward polar residues: residues 608–619 (NGTNNSDSNGTP) and 632–644 (NPGN…LGDK).

It in the central section; belongs to the AAA ATPase family. In the C-terminal section; belongs to the peptidase M41 family. In terms of assembly, homohexamer. Zn(2+) serves as cofactor.

It is found in the cell inner membrane. Acts as a processive, ATP-dependent zinc metallopeptidase for both cytoplasmic and membrane proteins. Plays a role in the quality control of integral membrane proteins. This chain is ATP-dependent zinc metalloprotease FtsH, found in Salmonella typhi.